Reading from the N-terminus, the 488-residue chain is Glutamyl-tRNA(Gln) amidotransferase subunit A (488 aa).

Catalysis depends on charge relay system residues Lys77 and Ser152. Catalysis depends on Ser176, which acts as the Acyl-ester intermediate.

Belongs to the amidase family. GatA subfamily. Heterotrimer of A, B and C subunits.

The catalysed reaction is L-glutamyl-tRNA(Gln) + L-glutamine + ATP + H2O = L-glutaminyl-tRNA(Gln) + L-glutamate + ADP + phosphate + H(+). Its function is as follows. Allows the formation of correctly charged Gln-tRNA(Gln) through the transamidation of misacylated Glu-tRNA(Gln) in organisms which lack glutaminyl-tRNA synthetase. The reaction takes place in the presence of glutamine and ATP through an activated gamma-phospho-Glu-tRNA(Gln). The sequence is that of Glutamyl-tRNA(Gln) amidotransferase subunit A from Streptococcus pyogenes serotype M18 (strain MGAS8232).